The primary structure comprises 352 residues: Holliday junction branch migration complex subunit RuvB (352 aa).

Residues 13–201 are large ATPase domain (RuvB-L); it reads FSLRKKELRL…FGISQKIEFY (189 aa). Residues Arg-41, Gly-82, Lys-85, Thr-86, Thr-87, 148 to 150, Arg-191, Tyr-201, and Arg-238 each bind ATP; that span reads EDF. Mg(2+) is bound at residue Thr-86. The segment at 202-273 is small ATPAse domain (RuvB-S); that stretch reads TYDELKQIIV…LIKKALNSYQ (72 aa). The head domain (RuvB-H) stretch occupies residues 276–352; the sequence is EKGLDSLDRN…KYIDSKNENF (77 aa). DNA contacts are provided by Arg-330 and Arg-335.

The protein belongs to the RuvB family. As to quaternary structure, homohexamer. Forms an RuvA(8)-RuvB(12)-Holliday junction (HJ) complex. HJ DNA is sandwiched between 2 RuvA tetramers; dsDNA enters through RuvA and exits via RuvB. An RuvB hexamer assembles on each DNA strand where it exits the tetramer. Each RuvB hexamer is contacted by two RuvA subunits (via domain III) on 2 adjacent RuvB subunits; this complex drives branch migration. In the full resolvosome a probable DNA-RuvA(4)-RuvB(12)-RuvC(2) complex forms which resolves the HJ.

The protein resides in the cytoplasm. It carries out the reaction ATP + H2O = ADP + phosphate + H(+). The RuvA-RuvB-RuvC complex processes Holliday junction (HJ) DNA during genetic recombination and DNA repair, while the RuvA-RuvB complex plays an important role in the rescue of blocked DNA replication forks via replication fork reversal (RFR). RuvA specifically binds to HJ cruciform DNA, conferring on it an open structure. The RuvB hexamer acts as an ATP-dependent pump, pulling dsDNA into and through the RuvAB complex. RuvB forms 2 homohexamers on either side of HJ DNA bound by 1 or 2 RuvA tetramers; 4 subunits per hexamer contact DNA at a time. Coordinated motions by a converter formed by DNA-disengaged RuvB subunits stimulates ATP hydrolysis and nucleotide exchange. Immobilization of the converter enables RuvB to convert the ATP-contained energy into a lever motion, pulling 2 nucleotides of DNA out of the RuvA tetramer per ATP hydrolyzed, thus driving DNA branch migration. The RuvB motors rotate together with the DNA substrate, which together with the progressing nucleotide cycle form the mechanistic basis for DNA recombination by continuous HJ branch migration. Branch migration allows RuvC to scan DNA until it finds its consensus sequence, where it cleaves and resolves cruciform DNA. The polypeptide is Holliday junction branch migration complex subunit RuvB (Prochlorococcus marinus (strain MIT 9215)).